The sequence spans 431 residues: Polyprenol-phosphate-mannose-dependent alpha-(1-2)-phosphatidylinositol pentamannoside mannosyltransferase (431 aa).

The next 10 helical transmembrane spans lie at 43 to 63 (AAVL…YLAP), 108 to 128 (FAAV…ALLW), 148 to 168 (GGTA…AIWI), 175 to 195 (FDYG…VYTP), 202 to 222 (LLVG…VYLV), 229 to 249 (AAAF…LVVG), 290 to 310 (GFGP…ILAW), 332 to 352 (LSPI…IWLI), 364 to 384 (ILGW…LSFA), and 397 to 417 (LAWA…WIAA).

This sequence belongs to the glycosyltransferase 87 family.

It is found in the cell membrane. The protein operates within phospholipid metabolism; phosphatidylinositol metabolism. Its function is as follows. Catalyzes the alpha-1,2 addition of a mannose residue from polyprenol-phosphate-mannose (PPM) to a monoacyl phosphatidylinositol tetramannoside (AcPIM4) to generate a monoacyl phosphatidylinositol pentamannoside (AcPIM5). The protein is Polyprenol-phosphate-mannose-dependent alpha-(1-2)-phosphatidylinositol pentamannoside mannosyltransferase (pimE) of Mycobacterium tuberculosis (strain CDC 1551 / Oshkosh).